A 155-amino-acid chain; its full sequence is Small ribosomal subunit protein uS7cz/uS7cy (155 aa).

The protein belongs to the universal ribosomal protein uS7 family. As to quaternary structure, part of the 30S ribosomal subunit.

It is found in the plastid. Its subcellular location is the chloroplast. Its function is as follows. One of the primary rRNA binding proteins, it binds directly to 16S rRNA where it nucleates assembly of the head domain of the 30S subunit. In Cucumis sativus (Cucumber), this protein is Small ribosomal subunit protein uS7cz/uS7cy (rps7-A).